Consider the following 358-residue polypeptide: Neuronal-specific septin-3 (358 aa).

Residues 1–10 show a composition bias toward basic and acidic residues; it reads MSKGLPEART. The tract at residues 1–29 is disordered; it reads MSKGLPEARTDTAMSELVPEPRPKPAVPM. In terms of domain architecture, Septin-type G spans 58–331; that stretch reads TGFDFNIMVV…ETYRAKRLND (274 aa). The interval 68 to 75 is G1 motif; sequence GQSGLGKS. A GTP-binding site is contributed by 68–75; it reads GQSGLGKS. Phosphoserine is present on Ser-91. Thr-102 provides a ligand contact to GTP. Residues 125–128 are G3 motif; sequence DTPG. The G4 motif stretch occupies residues 207 to 210; that stretch reads AKAD. GTP contacts are provided by residues 208 to 216, Gly-265, and Arg-280; that span reads KADTMTLEE.

The protein belongs to the TRAFAC class TrmE-Era-EngA-EngB-Septin-like GTPase superfamily. Septin GTPase family. Septins polymerize into heterooligomeric protein complexes that form filaments, and can associate with cellular membranes, actin filaments and microtubules. GTPase activity is required for filament formation. Phosphorylated by PKG on serine residues. Phosphorylated by PKG on Ser-91. Brain-specific, with highest expression in the hippocampal CA3 region (at protein level).

The protein resides in the cytoplasm. The protein localises to the cytoskeleton. Its subcellular location is the synapse. Its function is as follows. Filament-forming cytoskeletal GTPase. May play a role in cytokinesis (Potential). The sequence is that of Neuronal-specific septin-3 from Rattus norvegicus (Rat).